The chain runs to 238 residues: Ubiquinone/menaquinone biosynthesis C-methyltransferase UbiE (238 aa).

2 residues coordinate S-adenosyl-L-methionine: T62 and D82.

The protein belongs to the class I-like SAM-binding methyltransferase superfamily. MenG/UbiE family.

The enzyme catalyses a 2-demethylmenaquinol + S-adenosyl-L-methionine = a menaquinol + S-adenosyl-L-homocysteine + H(+). The catalysed reaction is a 2-methoxy-6-(all-trans-polyprenyl)benzene-1,4-diol + S-adenosyl-L-methionine = a 5-methoxy-2-methyl-3-(all-trans-polyprenyl)benzene-1,4-diol + S-adenosyl-L-homocysteine + H(+). The protein operates within quinol/quinone metabolism; menaquinone biosynthesis; menaquinol from 1,4-dihydroxy-2-naphthoate: step 2/2. It functions in the pathway cofactor biosynthesis; ubiquinone biosynthesis. Functionally, methyltransferase required for the conversion of demethylmenaquinol (DMKH2) to menaquinol (MKH2) and the conversion of 2-polyprenyl-6-methoxy-1,4-benzoquinol (DDMQH2) to 2-polyprenyl-3-methyl-6-methoxy-1,4-benzoquinol (DMQH2). This chain is Ubiquinone/menaquinone biosynthesis C-methyltransferase UbiE, found in Wolbachia pipientis wMel.